A 354-amino-acid polypeptide reads, in one-letter code: UDP-N-acetylglucosamine--N-acetylmuramyl-(pentapeptide) pyrophosphoryl-undecaprenol N-acetylglucosamine transferase (354 aa).

Residues 15 to 17, Asn-127, Arg-163, Ser-191, Ile-244, 263 to 268, and Gln-288 each bind UDP-N-acetyl-alpha-D-glucosamine; these read TGG and ALTVSE.

This sequence belongs to the glycosyltransferase 28 family. MurG subfamily.

The protein resides in the cell inner membrane. The enzyme catalyses di-trans,octa-cis-undecaprenyl diphospho-N-acetyl-alpha-D-muramoyl-L-alanyl-D-glutamyl-meso-2,6-diaminopimeloyl-D-alanyl-D-alanine + UDP-N-acetyl-alpha-D-glucosamine = di-trans,octa-cis-undecaprenyl diphospho-[N-acetyl-alpha-D-glucosaminyl-(1-&gt;4)]-N-acetyl-alpha-D-muramoyl-L-alanyl-D-glutamyl-meso-2,6-diaminopimeloyl-D-alanyl-D-alanine + UDP + H(+). It functions in the pathway cell wall biogenesis; peptidoglycan biosynthesis. Functionally, cell wall formation. Catalyzes the transfer of a GlcNAc subunit on undecaprenyl-pyrophosphoryl-MurNAc-pentapeptide (lipid intermediate I) to form undecaprenyl-pyrophosphoryl-MurNAc-(pentapeptide)GlcNAc (lipid intermediate II). The chain is UDP-N-acetylglucosamine--N-acetylmuramyl-(pentapeptide) pyrophosphoryl-undecaprenol N-acetylglucosamine transferase from Vibrio cholerae serotype O1 (strain ATCC 39541 / Classical Ogawa 395 / O395).